Here is a 182-residue protein sequence, read N- to C-terminus: Ribulose bisphosphate carboxylase small subunit, chloroplastic 1 (182 aa).

The N-terminal 42 residues, methionine 1–glutamate 42, are a transit peptide targeting the chloroplast.

The protein belongs to the RuBisCO small chain family. Heterohexadecamer of 8 large and 8 small subunits.

Its subcellular location is the plastid. It localises to the chloroplast. Its function is as follows. RuBisCO catalyzes two reactions: the carboxylation of D-ribulose 1,5-bisphosphate, the primary event in carbon dioxide fixation, as well as the oxidative fragmentation of the pentose substrate. Both reactions occur simultaneously and in competition at the same active site. Although the small subunit is not catalytic it is essential for maximal activity. This is Ribulose bisphosphate carboxylase small subunit, chloroplastic 1 from Acetabularia acetabulum (Mermaid's wine glass).